A 285-amino-acid polypeptide reads, in one-letter code: Probable endonuclease 4 (285 aa).

Zn(2+) contacts are provided by His-69, His-109, Glu-145, Asp-179, His-182, His-216, Asp-229, His-231, and Glu-261.

The protein belongs to the AP endonuclease 2 family. Zn(2+) serves as cofactor.

The enzyme catalyses Endonucleolytic cleavage to 5'-phosphooligonucleotide end-products.. Endonuclease IV plays a role in DNA repair. It cleaves phosphodiester bonds at apurinic or apyrimidinic (AP) sites, generating a 3'-hydroxyl group and a 5'-terminal sugar phosphate. The sequence is that of Probable endonuclease 4 from Shigella boydii serotype 18 (strain CDC 3083-94 / BS512).